We begin with the raw amino-acid sequence, 371 residues long: Leu/Ile/Val-binding protein homolog 1 (371 aa).

The signal sequence occupies residues 1–23 (MRKTLFSGVALAAVIAFGGSAWA).

Belongs to the leucine-binding protein family.

In terms of biological role, component of an amino-acid transport system. The chain is Leu/Ile/Val-binding protein homolog 1 from Brucella suis biovar 1 (strain 1330).